Reading from the N-terminus, the 298-residue chain is WRKY transcription factor 22 (298 aa).

Disordered regions lie at residues 75–116 and 181–220; these read EEPR…IQHK and AEHN…TYSS. Positions 88–103 are enriched in low complexity; the sequence is SLSASSGSVTSKPSGS. The segment covering 107–116 has biased composition (basic residues); the sequence is RSKRRKIQHK. Positions 122–188 form a DNA-binding region, WRKY; that stretch reads AAEALNSDVW…YTAEHNHPAP (67 aa). The segment covering 190-220 has biased composition (polar residues); it reads HRNSLAGSTRQKPSDQQTSKSPTTTIATYSS.

This sequence belongs to the WRKY group II-e family.

The protein resides in the nucleus. In terms of biological role, transcription factor involved in the expression of defense genes in innate immune response of plants. Interacts specifically with the W box (5'-(T)TGAC[CT]-3'), a frequently occurring elicitor-responsive cis-acting element. Activates WRKY 29, SIRK and its own promoters. The polypeptide is WRKY transcription factor 22 (WRKY22) (Arabidopsis thaliana (Mouse-ear cress)).